A 344-amino-acid polypeptide reads, in one-letter code: HTH-type transcriptional repressor MelR (344 aa).

One can recognise an HTH lacI-type domain in the interval 2 to 58 (VRIKDIALKAKVSSATVSRILNEDESLSVAGETRQRVINIAEELGYQTVAKRRKSRG). The H-T-H motif DNA-binding region spans 4 to 23 (IKDIALKAKVSSATVSRILN).

The protein resides in the cytoplasm. In terms of biological role, represses the melibiose operon melREDCA in the absence of melibiose or raffinose. Binds to two binding sites at the promoter region of the operon. In Bacillus subtilis (strain 168), this protein is HTH-type transcriptional repressor MelR.